Consider the following 861-residue polypeptide: Leucine--tRNA ligase (861 aa).

The 'HIGH' region signature appears at 42–52; sequence PYPSGKLHMGH. Residues 620 to 624 carry the 'KMSKS' region motif; it reads KMSKS. K623 serves as a coordination point for ATP.

This sequence belongs to the class-I aminoacyl-tRNA synthetase family.

The protein resides in the cytoplasm. The catalysed reaction is tRNA(Leu) + L-leucine + ATP = L-leucyl-tRNA(Leu) + AMP + diphosphate. The polypeptide is Leucine--tRNA ligase (Marinobacter nauticus (strain ATCC 700491 / DSM 11845 / VT8) (Marinobacter aquaeolei)).